A 217-amino-acid chain; its full sequence is Proteasome subunit beta type-6-B like protein (217 aa).

Residues M1–G16 constitute a propeptide, removed in mature form. T17 acts as the Nucleophile in catalysis.

It belongs to the peptidase T1B family. The 26S proteasome consists of a 20S proteasome core and two 19S regulatory subunits. The 20S proteasome core is composed of 28 subunits that are arranged in four stacked rings, resulting in a barrel-shaped structure. The two end rings are each formed by seven alpha subunits, and the two central rings are each formed by seven beta subunits. The catalytic chamber with the active sites is on the inside of the barrel.

The protein localises to the cytoplasm. It localises to the nucleus. It carries out the reaction Cleavage of peptide bonds with very broad specificity.. The proteasome is a multicatalytic proteinase complex which is characterized by its ability to cleave peptides with Arg, Phe, Tyr, Leu, and Glu adjacent to the leaving group at neutral or slightly basic pH. The proteasome has an ATP-dependent proteolytic activity. This subunit is involved in antigen processing to generate class I binding peptides. This is Proteasome subunit beta type-6-B like protein (psmb6l-b) from Salmo salar (Atlantic salmon).